Here is a 78-residue protein sequence, read N- to C-terminus: uncharacterized protein (78 aa).

A helical transmembrane segment spans residues 13 to 33 (STILILLMSVLILLLSIDILA).

It localises to the membrane. This is an uncharacterized protein from Methanocaldococcus jannaschii (strain ATCC 43067 / DSM 2661 / JAL-1 / JCM 10045 / NBRC 100440) (Methanococcus jannaschii).